A 337-amino-acid polypeptide reads, in one-letter code: G-protein coupled receptor 65 (337 aa).

Residues 1–5 (MNSTC) lie on the Extracellular side of the membrane. A glycan (N-linked (GlcNAc...) asparagine) is linked at N2. Disulfide bonds link C5-C160 and C87-C170. The helical transmembrane segment at 6–42 (IEEQHDLDHYLFPIVYIFVIIVSIPANIGSLCVSFLQ) threads the bilayer. Topologically, residues 43–46 (AKKE) are cytoplasmic. Residues 47-77 (SELGIYLFSLSLSDLLYALTLPLWIDYTWNK) traverse the membrane as a helical segment. Residues 78-82 (DNWTF) are Extracellular-facing. A glycan (N-linked (GlcNAc...) asparagine) is linked at N79. The chain crosses the membrane as a helical span at residues 83 to 118 (SPALCKGSAFLMYMNFYSSTAFLTCIAVDRYLAVVY). Over 119–126 (PLKFFFLR) the chain is Cytoplasmic. The helical transmembrane segment at 127–153 (TRRFALMVSLSIWILETIFNAVMLWED) threads the bilayer. Over 154–174 (ETVVEYCDAEKSNFTLCYDKY) the chain is Extracellular. The extracellular loop 2 (ECL2) stretch occupies residues 154-174 (ETVVEYCDAEKSNFTLCYDKY). A glycan (N-linked (GlcNAc...) asparagine) is linked at N166. The chain crosses the membrane as a helical span at residues 175-212 (PLEKWQINLNLFRTCTGYAIPLVTILICNRKVYQAVRH). The Cytoplasmic portion of the chain corresponds to 213–216 (NKAT). Residues 217–252 (ENKEKKRIIKLLVSITVTFVLCFTPFHVMLLIRCIL) form a helical membrane-spanning segment. Residues 253–264 (EHAVNFEDHSNS) lie on the Extracellular side of the membrane. A helical membrane pass occupies residues 265-293 (GKRTYTMYRITVALTSLNCVADPILYCFV). At 294-337 (TETGRYDMWNILKFCTGRCNTSQRQRKRILSVSTKDTMELEVLE) the chain is on the cytoplasmic side.

The protein belongs to the G-protein coupled receptor 1 family. Predominantly expressed in thymus, spleen, lymph nodes, small intestine, lung, placenta and peripheral blood leukocytes.

Its subcellular location is the cell membrane. It localises to the early endosome membrane. It is found in the late endosome membrane. Activated by a network of residues that connects an extracellular-facing cavity to Glu-142, a conserved charged residue buried in the transmembrane core of the receptor. Protonation likely drives conformational changes in extracellular loop 2 (ECL2), which stabilizes movement of transmembrane 3 (TM3) and a series of rearrangements that connect the extracellular-facing cavity to Glu-142, a residue only conserved in proton-sensing G-protein coupled receptors. Activated by BTB09089, a positive allosteric modulator. Functionally, proton-sensing G-protein coupled receptor activated by extracellular pH, which is required to monitor pH changes and generate adaptive reactions. Activated by an optimal pH of 7.4. Ligand binding causes a conformation change that triggers signaling via guanine nucleotide-binding proteins (G proteins) and modulates the activity of downstream effectors, such as adenylate cyclase. GPR65 is mainly coupled to G(s) G proteins and mediates activation of adenylate cyclase activity. May also act as a receptor for the glycosphingolipid psychosine (PSY) and several related glycosphingolipids. Plays a role in immune response by maintaining lysosome function and regulating T-cell metabolism. Acts as a regulator of inflammation by mediating pH-sensing of extracellular acidification which takes place in inflamed tissues: activation regulates endo-lysosomal function of immune cells and T-cell metabolism. Constitutively active in endosomes and stimulates adenylate cyclase production from endosomes independently from extracellular pH changes. This is G-protein coupled receptor 65 from Homo sapiens (Human).